The following is a 444-amino-acid chain: U-box domain-containing protein 31 (444 aa).

The region spanning 59–133 (EIPSVFICPI…YTWFSQKYVL (75 aa)) is the U-box domain. ARM repeat units follow at residues 301 to 340 (KQVR…SLCL) and 343 to 382 (EGRI…SVCK).

It carries out the reaction S-ubiquitinyl-[E2 ubiquitin-conjugating enzyme]-L-cysteine + [acceptor protein]-L-lysine = [E2 ubiquitin-conjugating enzyme]-L-cysteine + N(6)-ubiquitinyl-[acceptor protein]-L-lysine.. Its pathway is protein modification; protein ubiquitination. Its function is as follows. Functions as an E3 ubiquitin ligase. This chain is U-box domain-containing protein 31 (PUB31), found in Arabidopsis thaliana (Mouse-ear cress).